The chain runs to 25 residues: Omega conotoxin-CVIF (25 aa).

3 cysteine pairs are disulfide-bonded: Cys-1–Cys-16, Cys-8–Cys-20, and Cys-15–Cys-25. At Cys-25 the chain carries Cysteine amide.

This sequence belongs to the conotoxin O1 superfamily. As to expression, expressed by the venom duct.

The protein resides in the secreted. Omega-conotoxins act at presynaptic membranes, they bind and block voltage-gated calcium channels. This toxin blocks N-type calcium channels (Cav2.2/CACNA1B). It shows a higher potency when Cav2.2/CACNA1B is only expressed with the ancillary subunit CACNB3 (IC(50)=0.1 nM) than on Cav2.2/CACNA1B expressed with the ancillary subunits CACNA2D1 and CACNB3 (IC(50)=19.9 nM). The Cav2.2/CACNA1B block by this toxin is voltage-independent, whereas the recovery from toxin block is voltage-dependent. There is a low recovery at physiological membrane potential and a high recovery with hyperpolarized potential. This indicates that the toxin has a higher affinity for Cav2.2/CACNA1B in the inactivated state. It is noteworthy that ancillary subunits beta modulate recovery from this toxin block. Cav2.2/CACNA1B expressed with the ancillary subunit CACNB2a (isoform 2a) almost recover completely from this toxin block, whereas an expression with CACNB3 exhibits relatively weak recovery. Inhibition by this toxin of excitatory synaptic transmission is reversible. In vivo, when tested on rat model of persistent pain, this toxin blocks chronic pain behavior. This chain is Omega conotoxin-CVIF, found in Conus catus (Cat cone).